A 294-amino-acid chain; its full sequence is Ribosomal RNA small subunit methyltransferase H (294 aa).

Residues 40 to 42 (GGH), Asp59, Phe86, Asp102, and Gln109 each bind S-adenosyl-L-methionine.

This sequence belongs to the methyltransferase superfamily. RsmH family.

It is found in the cytoplasm. It carries out the reaction cytidine(1402) in 16S rRNA + S-adenosyl-L-methionine = N(4)-methylcytidine(1402) in 16S rRNA + S-adenosyl-L-homocysteine + H(+). Functionally, specifically methylates the N4 position of cytidine in position 1402 (C1402) of 16S rRNA. This Cyanothece sp. (strain PCC 7425 / ATCC 29141) protein is Ribosomal RNA small subunit methyltransferase H.